The primary structure comprises 187 residues: RNA pyrophosphohydrolase (187 aa).

The Nudix hydrolase domain maps to 6–149; it reads GYRANVGIIL…KRQVYRQALT (144 aa). The short motif at 38 to 59 is the Nudix box element; it reads GGIKSGETPTEAMYRELAEETG. The tract at residues 166–187 is disordered; sequence AYREPLEPVEKNRKKSSDTRQS.

It belongs to the Nudix hydrolase family. RppH subfamily. It depends on a divalent metal cation as a cofactor.

Accelerates the degradation of transcripts by removing pyrophosphate from the 5'-end of triphosphorylated RNA, leading to a more labile monophosphorylated state that can stimulate subsequent ribonuclease cleavage. The protein is RNA pyrophosphohydrolase of Nitrosomonas europaea (strain ATCC 19718 / CIP 103999 / KCTC 2705 / NBRC 14298).